Consider the following 299-residue polypeptide: ATP phosphoribosyltransferase (299 aa).

The protein belongs to the ATP phosphoribosyltransferase family. Long subfamily. As to quaternary structure, equilibrium between an active dimeric form, an inactive hexameric form and higher aggregates. Interconversion between the various forms is largely reversible and is influenced by the natural substrates and inhibitors of the enzyme. Mg(2+) is required as a cofactor.

The protein localises to the cytoplasm. It catalyses the reaction 1-(5-phospho-beta-D-ribosyl)-ATP + diphosphate = 5-phospho-alpha-D-ribose 1-diphosphate + ATP. It participates in amino-acid biosynthesis; L-histidine biosynthesis; L-histidine from 5-phospho-alpha-D-ribose 1-diphosphate: step 1/9. With respect to regulation, feedback inhibited by histidine. Catalyzes the condensation of ATP and 5-phosphoribose 1-diphosphate to form N'-(5'-phosphoribosyl)-ATP (PR-ATP). Has a crucial role in the pathway because the rate of histidine biosynthesis seems to be controlled primarily by regulation of HisG enzymatic activity. In Escherichia coli O7:K1 (strain IAI39 / ExPEC), this protein is ATP phosphoribosyltransferase.